We begin with the raw amino-acid sequence, 89 residues long: Co-chaperonin GroES (89 aa).

Belongs to the GroES chaperonin family. As to quaternary structure, heptamer of 7 subunits arranged in a ring. Interacts with the chaperonin GroEL.

The protein localises to the cytoplasm. Together with the chaperonin GroEL, plays an essential role in assisting protein folding. The GroEL-GroES system forms a nano-cage that allows encapsulation of the non-native substrate proteins and provides a physical environment optimized to promote and accelerate protein folding. GroES binds to the apical surface of the GroEL ring, thereby capping the opening of the GroEL channel. The polypeptide is Co-chaperonin GroES (Fervidobacterium nodosum (strain ATCC 35602 / DSM 5306 / Rt17-B1)).